Consider the following 328-residue polypeptide: Flap endonuclease 1 (328 aa).

Positions 1–98 (MGVKLRDVVS…ETVSRRADIR (98 aa)) are N-domain. Residues Asp27, Asp80, Glu152, Glu154, Asp173, Asp175, and Asp226 each coordinate Mg(2+). The tract at residues 116-247 (RAKKYAVRSS…RGLKLIREKG (132 aa)) is I-domain. The interval 320–328 (TQKSLEDWF) is interaction with PCNA.

The protein belongs to the XPG/RAD2 endonuclease family. FEN1 subfamily. As to quaternary structure, interacts with PCNA. PCNA stimulates the nuclease activity without altering cleavage specificity. Mg(2+) serves as cofactor.

Structure-specific nuclease with 5'-flap endonuclease and 5'-3' exonuclease activities involved in DNA replication and repair. During DNA replication, cleaves the 5'-overhanging flap structure that is generated by displacement synthesis when DNA polymerase encounters the 5'-end of a downstream Okazaki fragment. Binds the unpaired 3'-DNA end and kinks the DNA to facilitate 5' cleavage specificity. Cleaves one nucleotide into the double-stranded DNA from the junction in flap DNA, leaving a nick for ligation. Also involved in the base excision repair (BER) pathway. Acts as a genome stabilization factor that prevents flaps from equilibrating into structures that lead to duplications and deletions. Also possesses 5'-3' exonuclease activity on nicked or gapped double-stranded DNA. The sequence is that of Flap endonuclease 1 from Methanothermobacter thermautotrophicus (strain ATCC 29096 / DSM 1053 / JCM 10044 / NBRC 100330 / Delta H) (Methanobacterium thermoautotrophicum).